The chain runs to 276 residues: NADPH-dependent 7-cyano-7-deazaguanine reductase (276 aa).

83-85 (IES) provides a ligand contact to substrate. 85–86 (SK) provides a ligand contact to NADPH. Residue Cys184 is the Thioimide intermediate of the active site. Asp191 serves as the catalytic Proton donor. Residue 223–224 (HE) participates in substrate binding. 252-253 (RG) is a binding site for NADPH.

The protein belongs to the GTP cyclohydrolase I family. QueF type 2 subfamily. Homodimer.

The protein localises to the cytoplasm. The catalysed reaction is 7-aminomethyl-7-carbaguanine + 2 NADP(+) = 7-cyano-7-deazaguanine + 2 NADPH + 3 H(+). It functions in the pathway tRNA modification; tRNA-queuosine biosynthesis. Functionally, catalyzes the NADPH-dependent reduction of 7-cyano-7-deazaguanine (preQ0) to 7-aminomethyl-7-deazaguanine (preQ1). This Pseudomonas putida (strain ATCC 47054 / DSM 6125 / CFBP 8728 / NCIMB 11950 / KT2440) protein is NADPH-dependent 7-cyano-7-deazaguanine reductase.